The primary structure comprises 463 residues: A-type ATP synthase subunit B (463 aa).

It belongs to the ATPase alpha/beta chains family. As to quaternary structure, has multiple subunits with at least A(3), B(3), C, D, E, F, H, I and proteolipid K(x).

The protein resides in the cell membrane. Functionally, component of the A-type ATP synthase that produces ATP from ADP in the presence of a proton gradient across the membrane. The B chain is a regulatory subunit. This chain is A-type ATP synthase subunit B, found in Thermococcus sp. (strain KI).